A 236-amino-acid polypeptide reads, in one-letter code: Opacity protein opA50 (236 aa).

Residue Ala1 is a signal peptide.

Belongs to the opacity porin family.

The protein localises to the cell outer membrane. Functionally, implicated in a number of adherence functions. OPA proteins are implicated in pathogenesis and are subject to phase variation. The chain is Opacity protein opA50 (opaC) from Neisseria gonorrhoeae.